A 253-amino-acid polypeptide reads, in one-letter code: Triosephosphate isomerase (253 aa).

9-11 (NWK) lines the substrate pocket. Catalysis depends on His-95, which acts as the Electrophile. Catalysis depends on Glu-167, which acts as the Proton acceptor. Residues Gly-173, Ser-213, and 234 to 235 (GG) contribute to the substrate site. Residue Ser-213 is modified to Phosphoserine.

The protein belongs to the triosephosphate isomerase family. In terms of assembly, homodimer.

Its subcellular location is the cytoplasm. The enzyme catalyses D-glyceraldehyde 3-phosphate = dihydroxyacetone phosphate. It functions in the pathway carbohydrate biosynthesis; gluconeogenesis. It participates in carbohydrate degradation; glycolysis; D-glyceraldehyde 3-phosphate from glycerone phosphate: step 1/1. Involved in the gluconeogenesis. Catalyzes stereospecifically the conversion of dihydroxyacetone phosphate (DHAP) to D-glyceraldehyde-3-phosphate (G3P). The protein is Triosephosphate isomerase of Bacillus velezensis (strain DSM 23117 / BGSC 10A6 / LMG 26770 / FZB42) (Bacillus amyloliquefaciens subsp. plantarum).